An 884-amino-acid chain; its full sequence is DNA mismatch repair protein MutS (884 aa).

651-658 contacts ATP; sequence GPNMSGKS. Positions 843–884 are disordered; the sequence is LRNQGKSQPAQKNCKKEPAPNRSPDPAVGDQLSLIPAPLFPD.

This sequence belongs to the DNA mismatch repair MutS family.

In terms of biological role, this protein is involved in the repair of mismatches in DNA. It is possible that it carries out the mismatch recognition step. This protein has a weak ATPase activity. This Synechococcus sp. (strain JA-2-3B'a(2-13)) (Cyanobacteria bacterium Yellowstone B-Prime) protein is DNA mismatch repair protein MutS.